The primary structure comprises 104 residues: Toxin-like protein 14 (104 aa).

A signal peptide spans 1–25; the sequence is MNTYNARLYIFSLALALVILKGTKC.

Contains 4 disulfide bonds. As to expression, expressed by the venom gland.

The protein localises to the secreted. The sequence is that of Toxin-like protein 14 from Urodacus yaschenkoi (Inland robust scorpion).